A 291-amino-acid polypeptide reads, in one-letter code: ATP synthase gamma chain (291 aa).

This sequence belongs to the ATPase gamma chain family. In terms of assembly, F-type ATPases have 2 components, CF(1) - the catalytic core - and CF(0) - the membrane proton channel. CF(1) has five subunits: alpha(3), beta(3), gamma(1), delta(1), epsilon(1). CF(0) has three main subunits: a, b and c.

It is found in the cell inner membrane. Functionally, produces ATP from ADP in the presence of a proton gradient across the membrane. The gamma chain is believed to be important in regulating ATPase activity and the flow of protons through the CF(0) complex. The chain is ATP synthase gamma chain from Aquifex aeolicus (strain VF5).